The following is an 834-amino-acid chain: Kinesin-like protein KIF18B (834 aa).

Residues 9–353 form the Kinesin motor domain; sequence VVRVVVRVRP…LKYADRAKEI (345 aa). 111-118 serves as a coordination point for ATP; that stretch reads GATGAGKT. A coiled-coil region spans residues 368-404; sequence ISQYATICQQLQAEVAFLREKLQMYEAGAQALQQQCS. 4 disordered regions span residues 400–508, 602–642, 655–686, and 800–834; these read QQQC…ADHS, LGAP…NLEM, RGSLPKAQPCSEPRTPKRERASSPSPSSRVCP, and KKPNRPFTVPEPPLSPHCLDDQRTPKGLTGVTESY. Positions 411–432 are enriched in low complexity; it reads SIPQSLSSSSLQPGPSSQSSTL. T431 bears the Phosphothreonine mark. The segment covering 462 to 474 has biased composition (polar residues); it reads EQEQCPQDKQCPT. S484 carries the post-translational modification Phosphoserine. Positions 611–620 are enriched in basic and acidic residues; sequence TSDKTFQKPT. The Nuclear localization signal motif lies at 619 to 627; sequence PTKEKKRKL. S634 and S657 each carry phosphoserine. T669 is modified (phosphothreonine). Phosphoserine is present on S814.

Belongs to the TRAFAC class myosin-kinesin ATPase superfamily. Kinesin family. In terms of assembly, interacts with MAPRE1; this interaction is required for efficient accumulation at microtubule plus ends. Interacts with KIF2C at microtubule tips; this interaction increases the affinity of both partners for microtubule plus ends and is required for robust microtubule depolymerization. KIF2C phosphorylation by AURKA or AURKB strongly reduces KIF18B-binding.

The protein localises to the nucleus. It is found in the cytoplasm. The protein resides in the cytoskeleton. In terms of biological role, in complex with KIF2C, constitutes the major microtubule plus-end depolymerizing activity in mitotic cells. Its major role may be to transport KIF2C and/or MAPRE1 along microtubules. In Mus musculus (Mouse), this protein is Kinesin-like protein KIF18B (Kif18b).